Reading from the N-terminus, the 195-residue chain is Peptidyl-tRNA hydrolase (195 aa).

Position 17 (Tyr-17) interacts with tRNA. The Proton acceptor role is filled by His-22. Positions 68, 70, and 116 each coordinate tRNA.

It belongs to the PTH family. Monomer.

It localises to the cytoplasm. It carries out the reaction an N-acyl-L-alpha-aminoacyl-tRNA + H2O = an N-acyl-L-amino acid + a tRNA + H(+). Its function is as follows. Hydrolyzes ribosome-free peptidyl-tRNAs (with 1 or more amino acids incorporated), which drop off the ribosome during protein synthesis, or as a result of ribosome stalling. In terms of biological role, catalyzes the release of premature peptidyl moieties from peptidyl-tRNA molecules trapped in stalled 50S ribosomal subunits, and thus maintains levels of free tRNAs and 50S ribosomes. This chain is Peptidyl-tRNA hydrolase, found in Shewanella loihica (strain ATCC BAA-1088 / PV-4).